Reading from the N-terminus, the 491-residue chain is Probable glycine dehydrogenase (decarboxylating) subunit 2 (491 aa).

The residue at position 273 (lysine 273) is an N6-(pyridoxal phosphate)lysine.

Belongs to the GcvP family. C-terminal subunit subfamily. The glycine cleavage system is composed of four proteins: P, T, L and H. In this organism, the P 'protein' is a heterodimer of two subunits. Pyridoxal 5'-phosphate is required as a cofactor.

The catalysed reaction is N(6)-[(R)-lipoyl]-L-lysyl-[glycine-cleavage complex H protein] + glycine + H(+) = N(6)-[(R)-S(8)-aminomethyldihydrolipoyl]-L-lysyl-[glycine-cleavage complex H protein] + CO2. Its function is as follows. The glycine cleavage system catalyzes the degradation of glycine. The P protein binds the alpha-amino group of glycine through its pyridoxal phosphate cofactor; CO(2) is released and the remaining methylamine moiety is then transferred to the lipoamide cofactor of the H protein. This is Probable glycine dehydrogenase (decarboxylating) subunit 2 from Bacillus velezensis (strain DSM 23117 / BGSC 10A6 / LMG 26770 / FZB42) (Bacillus amyloliquefaciens subsp. plantarum).